A 210-amino-acid chain; its full sequence is Large ribosomal subunit protein bL25 (210 aa).

The disordered stretch occupies residues 186-210 (ISSASTEKEAESNQESTSTTPSSES). Residues 198-210 (NQESTSTTPSSES) are compositionally biased toward low complexity.

This sequence belongs to the bacterial ribosomal protein bL25 family. CTC subfamily. In terms of assembly, part of the 50S ribosomal subunit; part of the 5S rRNA/L5/L18/L25 subcomplex. Contacts the 5S rRNA. Binds to the 5S rRNA independently of L5 and L18.

Its function is as follows. This is one of the proteins that binds to the 5S RNA in the ribosome where it forms part of the central protuberance. In Ehrlichia chaffeensis (strain ATCC CRL-10679 / Arkansas), this protein is Large ribosomal subunit protein bL25.